We begin with the raw amino-acid sequence, 1070 residues long: MFRGGNEGMSTIPGFNQIQFEGFCRFIDQGLTEELYKFPKIEDTDQEIEFQLFVETYQLVEPLIKERDAVYESLTYSSELYVSAGLIWKTSRDMQEQTIFIGNIPLMNSLGTSIVNGLYRIVINQILQSPGIYYRSELDHNGISVYTGTIVSDWGGRLELEIDRKARIWARVSRKQKISILVLSSAMGSNLREILENVCYPEIFLSFLNDKEKKKIGSKESAILEFYQQFACVGGDPVFSESLCKELQKKFFQQRCELGRIGRRNINRRLNLDIPQNNTFLLPQDILAAADHLIGMKFGMGILDDMNHLKNKRIRSVADLLQDQFGLALIRLENVVRGTICGAIRHKLIPTPQNLVTSTPVTTTYESFFGLHPLSQVLDRTNPLTQIVHGRKSSYLGPGGLTGRTASFRIRDIHPSHYGRICPIDTSEGINVGLIGSLAIHARIGHWGSLESPFYEISERSKKVRMLYLSPSRDEYYMVAAGNSLALNQGIQEEQVVPARYRQEFLTIAWEQVHLRSIFPFQYFSIGASLIPFIEHNDANRALMSSNMQRQAVPLSRSEKCIVGTGLERQAALDSGVPVIAEHEGKIVYTDTDKIILSGNGDTLSIPLVMYQRSNKNTCMHQKAQVRRGKCIKKGQILADGAATVGGELALGKNVLVAYMPWEGYNSEDAVLISERLVYGDIYTSFHIRKYEIQTHVTSQGPERITNKIPHLEAHLLRNLDKNGIVILGSWVETGDILVGKLTPQMAKESSYAPEDRLLRAILGIQVSTSKETCLKLPIGGRGRVIDVRWIQKKGGSSYNPETIRVYISQKREIKVGDKVAGRHGNKGIISKILPRQDMPYLQDGRPVDMVFNPLGVPSRMNVGQIFECSLGLAGGLLDRHYRIAPFDEKYEQEASRKLVFSELYEASKQTANPWVFEPEYPGKSRIFDGRTGDPFEQPVIIGKPYILKLIHQVDDKIHGRSSGHYALVTQQPLRGRAKQGGQRVGEMEVWALEGFGVAHILQEMLTYKSDHIRARQEVLGTTIIGGTIPNPEDAPESFRLLVRELRSLALELNHFLVSEKNFQINRKEA.

This sequence belongs to the RNA polymerase beta chain family. As to quaternary structure, in plastids the minimal PEP RNA polymerase catalytic core is composed of four subunits: alpha, beta, beta', and beta''. When a (nuclear-encoded) sigma factor is associated with the core the holoenzyme is formed, which can initiate transcription.

The protein localises to the plastid. It is found in the chloroplast. The enzyme catalyses RNA(n) + a ribonucleoside 5'-triphosphate = RNA(n+1) + diphosphate. DNA-dependent RNA polymerase catalyzes the transcription of DNA into RNA using the four ribonucleoside triphosphates as substrates. This is DNA-directed RNA polymerase subunit beta from Vitis vinifera (Grape).